The sequence spans 250 residues: Complement factor B-like protease (250 aa).

Sushi domains lie at 3 to 73 (TRCD…KCRA), 74 to 133 (VWCP…VCDD), and 136 to 193 (GDCP…QCRA). Intrachain disulfides connect Cys5–Cys44, Cys30–Cys71, Cys76–Cys118, Cys104–Cys131, Cys138–Cys178, and Cys164–Cys191. Residue Asn115 is glycosylated (N-linked (GlcNAc...) asparagine). N-linked (GlcNAc...) asparagine glycosylation is present at Asn221.

It belongs to the peptidase S1 family. In terms of tissue distribution, plasma.

The protein localises to the secreted. In terms of biological role, required in both the classical and alternate pathways of the complement system. This chain is Complement factor B-like protease, found in Gallus gallus (Chicken).